Consider the following 1131-residue polypeptide: Phytochrome B1 (1131 aa).

The segment covering M1–Y11 has biased composition (basic residues). The segment at M1–N26 is disordered. Residues S14 to S25 are compositionally biased toward low complexity. One can recognise a GAF domain in the interval D229–L408. C334 is a binding site for phytochromobilin. 2 consecutive PAS domains span residues V622–V693 and D756–F808. Residues Y904–R1124 enclose the Histidine kinase domain.

It belongs to the phytochrome family. In terms of assembly, homodimer. In terms of processing, contains one covalently linked phytochromobilin chromophore.

In terms of biological role, regulatory photoreceptor which exists in two forms that are reversibly interconvertible by light: the Pr form that absorbs maximally in the red region of the spectrum and the Pfr form that absorbs maximally in the far-red region. Photoconversion of Pr to Pfr induces an array of morphogenic responses, whereas reconversion of Pfr to Pr cancels the induction of those responses. Pfr controls the expression of a number of nuclear genes including those encoding the small subunit of ribulose-bisphosphate carboxylase, chlorophyll A/B binding protein, protochlorophyllide reductase, rRNA, etc. It also controls the expression of its own gene(s) in a negative feedback fashion. This chain is Phytochrome B1, found in Solanum lycopersicum (Tomato).